The following is a 202-amino-acid chain: FMN-dependent NADH:quinone oxidoreductase (202 aa).

FMN is bound by residues Ser-10 and 95–98 (MYNF).

The protein belongs to the azoreductase type 1 family. In terms of assembly, homodimer. The cofactor is FMN.

It carries out the reaction 2 a quinone + NADH + H(+) = 2 a 1,4-benzosemiquinone + NAD(+). The enzyme catalyses N,N-dimethyl-1,4-phenylenediamine + anthranilate + 2 NAD(+) = 2-(4-dimethylaminophenyl)diazenylbenzoate + 2 NADH + 2 H(+). Quinone reductase that provides resistance to thiol-specific stress caused by electrophilic quinones. Its function is as follows. Also exhibits azoreductase activity. Catalyzes the reductive cleavage of the azo bond in aromatic azo compounds to the corresponding amines. The protein is FMN-dependent NADH:quinone oxidoreductase of Pseudoalteromonas atlantica (strain T6c / ATCC BAA-1087).